The primary structure comprises 372 residues: Chaperone protein DnaJ (372 aa).

Residues glutamate 5–glycine 69 enclose the J domain. The segment at glycine 129–alanine 211 adopts a CR-type zinc-finger fold. 8 residues coordinate Zn(2+): cysteine 142, cysteine 145, cysteine 159, cysteine 162, cysteine 185, cysteine 188, cysteine 199, and cysteine 202. CXXCXGXG motif repeat units follow at residues cysteine 142–glycine 149, cysteine 159–glycine 166, cysteine 185–glycine 192, and cysteine 199–glycine 206.

This sequence belongs to the DnaJ family. In terms of assembly, homodimer. Zn(2+) serves as cofactor.

It is found in the cytoplasm. Its function is as follows. Participates actively in the response to hyperosmotic and heat shock by preventing the aggregation of stress-denatured proteins and by disaggregating proteins, also in an autonomous, DnaK-independent fashion. Unfolded proteins bind initially to DnaJ; upon interaction with the DnaJ-bound protein, DnaK hydrolyzes its bound ATP, resulting in the formation of a stable complex. GrpE releases ADP from DnaK; ATP binding to DnaK triggers the release of the substrate protein, thus completing the reaction cycle. Several rounds of ATP-dependent interactions between DnaJ, DnaK and GrpE are required for fully efficient folding. Also involved, together with DnaK and GrpE, in the DNA replication of plasmids through activation of initiation proteins. In Streptococcus pneumoniae (strain ATCC BAA-255 / R6), this protein is Chaperone protein DnaJ.